The sequence spans 612 residues: Glutamine--fructose-6-phosphate aminotransferase [isomerizing] (612 aa).

The active-site Nucleophile; for GATase activity is Cys2. The region spanning 2 to 220 (CGIVGAIRAH…DGDIALLASD (219 aa)) is the Glutamine amidotransferase type-2 domain. SIS domains follow at residues 288 to 428 (AKSV…VRGL) and 461 to 602 (WAQQ…VDKP). Lys607 acts as the For Fru-6P isomerization activity in catalysis.

In terms of assembly, homodimer.

The protein localises to the cytoplasm. The catalysed reaction is D-fructose 6-phosphate + L-glutamine = D-glucosamine 6-phosphate + L-glutamate. Functionally, catalyzes the first step in hexosamine metabolism, converting fructose-6P into glucosamine-6P using glutamine as a nitrogen source. The sequence is that of Glutamine--fructose-6-phosphate aminotransferase [isomerizing] from Neisseria meningitidis serogroup A / serotype 4A (strain DSM 15465 / Z2491).